Here is a 423-residue protein sequence, read N- to C-terminus: Serine hydroxymethyltransferase (423 aa).

121-123 (GHI) provides a ligand contact to (6S)-5,6,7,8-tetrahydrofolate. At lysine 227 the chain carries N6-(pyridoxal phosphate)lysine. Glutamate 242 provides a ligand contact to (6S)-5,6,7,8-tetrahydrofolate.

It belongs to the SHMT family. Homodimer. The cofactor is pyridoxal 5'-phosphate.

Its subcellular location is the cytoplasm. The enzyme catalyses 5,10-methylenetetrahydromethanopterin + glycine + H2O = 5,6,7,8-tetrahydromethanopterin + L-serine. Its pathway is amino-acid biosynthesis; glycine biosynthesis; glycine from L-serine: step 1/1. Its function is as follows. Catalyzes the reversible interconversion of serine and glycine with tetrahydromethanopterin (H4MPT) serving as the one-carbon carrier. Also exhibits a pteridine-independent aldolase activity toward beta-hydroxyamino acids, producing glycine and aldehydes, via a retro-aldol mechanism. This Methanothermobacter marburgensis (strain ATCC BAA-927 / DSM 2133 / JCM 14651 / NBRC 100331 / OCM 82 / Marburg) (Methanobacterium thermoautotrophicum) protein is Serine hydroxymethyltransferase.